A 289-amino-acid polypeptide reads, in one-letter code: Cuticle collagen 19 (289 aa).

The N-terminal stretch at 1-18 (MGKLIVVGSCGVLVCVLA) is a signal peptide. A disordered region spans residues 95-289 (SEGCPAGPPG…PCPSRAAYKA (195 aa)). Triple-helical region regions lie at residues 101–130 (GPPG…PGVI) and 147–269 (GRPG…KGED). The segment covering 162 to 183 (GPAGGNGRRGPPGPVGGPGEQG) has biased composition (gly residues). 2 stretches are compositionally biased toward low complexity: residues 184 to 207 (PQGD…GEPG) and 223 to 239 (PRGE…PGND).

Belongs to the cuticular collagen family. Collagen polypeptide chains are complexed within the cuticle by disulfide bonds and other types of covalent cross-links.

Functionally, nematode cuticles are composed largely of collagen-like proteins. The cuticle functions both as an exoskeleton and as a barrier to protect the worm from its environment. In Caenorhabditis elegans, this protein is Cuticle collagen 19 (col-19).